Here is a 136-residue protein sequence, read N- to C-terminus: Immunoglobulin J chain (136 aa).

Disulfide bonds link C12/C100, C71/C91, and C108/C133. The N-linked (GlcNAc...) (complex) asparagine glycan is linked to N48.

As to quaternary structure, part of the secretory IgA (sIgA) complex that consists of two, four or five IgA monomers, and two additional non-Ig polypeptides, namely the JCHAIN and the secretory component (the proteolytic product of PIGR). Part of the secretory IgM (sIgM) complex that consist of five IgM monomers, and two additional non-Ig polypeptides, namely the JCHAIN and the secretory component (the proteolytic product of PIGR). JCHAIN-containing IgM interacts (via CH4 domain) with FCRM (via Ig-like domain).

The protein resides in the secreted. Functionally, serves to link two monomer units of either IgM or IgA. In the case of IgM, the J chain-joined dimer is a nucleating unit for the IgM pentamer, and in the case of IgA it induces dimers and/or larger polymers. It also helps to bind these immunoglobulins to secretory component. This chain is Immunoglobulin J chain, found in Oryctolagus cuniculus (Rabbit).